A 261-amino-acid polypeptide reads, in one-letter code: MKKFLLKPKKSLGQNFILSSEITKRIVVLAGNLEDFNVIEIGPGYGALTKEILAHNPKSLLAIEKDSNLVKCHDQLLNEHQGKFRIVEADALYVVEEELIERPVKVIANLPYNISLALFLKWLNKIKLFTTFTLMFQKEVADRIIARPNSKDYGSLSVLSQLLCDIRREFDIEPKEFFPRPKVYSSVITVKPLPTQRFAVNLEALTKLTRAVFAQRRKMLRNSLQNVTNRTETALENAKLSGNERPKNLTVEQFCLLANNM.

S-adenosyl-L-methionine is bound by residues asparagine 15, isoleucine 17, glycine 42, glutamate 64, aspartate 90, and asparagine 109.

Belongs to the class I-like SAM-binding methyltransferase superfamily. rRNA adenine N(6)-methyltransferase family. RsmA subfamily.

It localises to the cytoplasm. It catalyses the reaction adenosine(1518)/adenosine(1519) in 16S rRNA + 4 S-adenosyl-L-methionine = N(6)-dimethyladenosine(1518)/N(6)-dimethyladenosine(1519) in 16S rRNA + 4 S-adenosyl-L-homocysteine + 4 H(+). In terms of biological role, specifically dimethylates two adjacent adenosines (A1518 and A1519) in the loop of a conserved hairpin near the 3'-end of 16S rRNA in the 30S particle. May play a critical role in biogenesis of 30S subunits. This is Ribosomal RNA small subunit methyltransferase A from Wolbachia sp. subsp. Brugia malayi (strain TRS).